A 98-amino-acid chain; its full sequence is uncharacterized protein (98 aa).

Positions 1–85 constitute an STAS domain; it reads MLETVPVRCV…GTLKQALENM (85 aa).

Post-translationally, phosphorylated on threonine residue(s). Phosphorylated by PrkC and dephosphorylated by PrpC.

It is found in the cytoplasm. This is an uncharacterized protein from Bacillus subtilis (strain 168).